A 262-amino-acid polypeptide reads, in one-letter code: Carbonic anhydrase 1 (262 aa).

Ala-2 carries the post-translational modification N-acetylalanine. One can recognise an Alpha-carbonic anhydrase domain in the interval 4-261 (LNWSYEGENG…LKGRQVKASF (258 aa)). The Proton donor/acceptor role is filled by His-65. Zn(2+) is bound by residues His-95, His-97, and His-120. Residues Thr-200 and 200-201 (TH) contribute to the substrate site.

This sequence belongs to the alpha-carbonic anhydrase family. Requires Zn(2+) as cofactor.

The protein localises to the cytoplasm. The enzyme catalyses hydrogencarbonate + H(+) = CO2 + H2O. It carries out the reaction urea = cyanamide + H2O. Inhibited by acetazolamide. Functionally, catalyzes the reversible hydration of carbon dioxide. Can hydrate cyanamide to urea. This is Carbonic anhydrase 1 (CA1) from Monodelphis domestica (Gray short-tailed opossum).